A 359-amino-acid chain; its full sequence is 1-deoxy-D-xylulose 5-phosphate reductoisomerase (359 aa).

Thr-12, Gly-13, Ser-14, Ile-15, Lys-38, and Asn-39 together coordinate NADPH. Position 105 (Lys-105) interacts with 1-deoxy-D-xylulose 5-phosphate. Residue Glu-106 participates in NADPH binding. Asp-130 lines the Mn(2+) pocket. 4 residues coordinate 1-deoxy-D-xylulose 5-phosphate: Ser-131, Glu-132, Ser-152, and His-175. Residue Glu-132 coordinates Mn(2+). Position 181 (Gly-181) interacts with NADPH. Positions 188, 193, 194, and 197 each coordinate 1-deoxy-D-xylulose 5-phosphate. Glu-197 is a binding site for Mn(2+).

Belongs to the DXR family. Mg(2+) is required as a cofactor. Requires Mn(2+) as cofactor.

It carries out the reaction 2-C-methyl-D-erythritol 4-phosphate + NADP(+) = 1-deoxy-D-xylulose 5-phosphate + NADPH + H(+). It participates in isoprenoid biosynthesis; isopentenyl diphosphate biosynthesis via DXP pathway; isopentenyl diphosphate from 1-deoxy-D-xylulose 5-phosphate: step 1/6. Catalyzes the NADPH-dependent rearrangement and reduction of 1-deoxy-D-xylulose-5-phosphate (DXP) to 2-C-methyl-D-erythritol 4-phosphate (MEP). In Pseudothermotoga lettingae (strain ATCC BAA-301 / DSM 14385 / NBRC 107922 / TMO) (Thermotoga lettingae), this protein is 1-deoxy-D-xylulose 5-phosphate reductoisomerase.